Here is a 1603-residue protein sequence, read N- to C-terminus: Gag-Pol polyprotein (1603 aa).

Residues 128-141 (VGETTVQRDAKMAP) are compositionally biased toward basic and acidic residues. Residues 128-150 (VGETTVQRDAKMAPEETATPKTV) are disordered. The PPXY motif motif lies at 172-175 (PPPY). Residues 180-184 (LYPSL) carry the LYPX(n)L motif motif. Positions 181–215 (YPSLAGVGEQQGQGGDTPRGAEQPRAEPGHAGLAP) are disordered. A Nuclear export signal motif is present at residues 219–229 (LTDWARIREEL). CCHC-type zinc fingers lie at residues 507-524 (RLCY…QCPK) and 533-550 (ERCQ…QCRR). Residues 544–571 (NAKQCRRRDSNQGQRPGRGLSSGPWPVS) form a disordered region. Positions 609 to 690 (ITALLDSGAD…VRGSILGRDC (82 aa)) constitute a Peptidase A2 domain. Catalysis depends on D614, which acts as the For protease activity; shared with dimeric partner. The 189-residue stretch at 750–938 (LQLGHIEPSL…PGVQYLGYKL (189 aa)) folds into the Reverse transcriptase domain. Positions 815, 890, 891, 1158, 1192, 1213, and 1272 each coordinate Mg(2+). The region spanning 1149–1280 (PVPGPTVFTD…ADSQATFQAY (132 aa)) is the RNase H type-1 domain. The Integrase-type zinc-finger motif lies at 1280-1321 (YPLREAKDLHTTLHIGPRALSKACNISMQQAREVVQTCPHCN). Residues H1289, H1293, C1317, and C1320 each coordinate Zn(2+). The Integrase catalytic domain occupies 1333–1496 (RGLGPLQIWQ…TPVQKHWRPT (164 aa)). Mg(2+) contacts are provided by D1344, D1401, and E1437. Positions 1502-1550 (PPVKIRIETGEWEKGWNVLVWGRGYAAVKNRDTDKVIWVPSRKVKPDIT) form a DNA-binding region, integrase-type. The interval 1548-1567 (DITQKDEVTKKDEASPLFAG) is involved in homooctamerization. Over residues 1549–1561 (ITQKDEVTKKDEA) the composition is skewed to basic and acidic residues. The segment at 1549 to 1603 (ITQKDEVTKKDEASPLFAGSSDWIPWGDEQEGLQEEAASNKQEGPGEDTLAANES) is disordered.

As to quaternary structure, active as a homodimer. In terms of assembly, homodimer. Homomultimer. Homohexamer. Homodimer; further associates as a homooctamer. As to quaternary structure, heterodimer of alpha and beta subunits. Three forms of RT exist: alpha-alpha (alpha-Pol), beta-beta (beta-Pol), and alpha-beta, with the major form being the heterodimer. Both the polymerase and RNase H active sites are located in the alpha subunit of heterodimeric RT alpha-beta. The cofactor is Mg(2+). Mn(2+) serves as cofactor. Specific enzymatic cleavages in vivo yield mature proteins. In terms of processing, capsid protein p27: The cleavage at the C-terminus is slowly trimmed by the viral protease, sometimes being cut internally thereby generating the short version of the capsid protein and a capsid protein C-terminally extended by 3 amino acids in a ratio of 2:1.

The protein resides in the virion. The enzyme catalyses DNA(n) + a 2'-deoxyribonucleoside 5'-triphosphate = DNA(n+1) + diphosphate. The catalysed reaction is Endonucleolytic cleavage to 5'-phosphomonoester.. Functionally, capsid protein p27: Self-associates to form the irregular polyhedron core composed of hexamers and pentamers, that encapsulates the genomic RNA-nucleocapsid complex. Assembles as a tube in vitro. Binds to inositol hexakisphosphate (IP6), which allows the assembly of the polyhedral capsid. Plays a role in the oligomerization of the Gag polyprotein and in the stabilization of the immature particle. Essential layering element during tube assembly. Allows the cooperative binging of Gag to the host plasma membrane. In terms of biological role, binds strongly to viral nucleic acids and promotes their packaging. Plays a role in the maturation-stabilization of the viral dimeric RNA via highly structured zinc-binding motifs. Its function is as follows. The aspartyl protease mediates proteolytic cleavages of Gag and Gag-Pol polyproteins during or shortly after the release of the virion from the plasma membrane. Cleavages take place as an ordered, step-wise cascade to yield mature proteins. This process is called maturation. Displays maximal activity during the budding process just prior to particle release from the cell. Functionally, catalyzes viral DNA integration into the host chromosome, by performing a series of DNA cutting and joining reactions. This recombination event is an essential step in the viral replication cycle. Has a strong preference for using the 3'-OH at the viral DNA end as a nucleophile. The sequence is that of Gag-Pol polyprotein (gag-pol) from Rous sarcoma virus subgroup B (strain Schmidt-Ruppin) (RSV-SR-B).